A 105-amino-acid chain; its full sequence is MPTIIVTTRDGEELSLEADTGLSLMEVIRDGGADELLALCGGCCSCATCHVKVDPAFLAALPPMSEDESDLLDSSDHRDATSRLSCQITVDDGLAGLRVAIAPED.

Positions 2–105 constitute a 2Fe-2S ferredoxin-type domain; sequence PTIIVTTRDG…GLRVAIAPED (104 aa). The [2Fe-2S] cluster site is built by Cys-40, Cys-46, Cys-49, and Cys-86.

Belongs to the adrenodoxin/putidaredoxin family. The chloroacetanilide N-alkylformylase multicomponent enzyme system is composed of an oxygenase component (CndA) and an electron transfer component formed by a ferredoxin reductase (CndC1) and a ferredoxin (CndB1). In vitro, chloroacetanilide N-alkylformylase assays in which CndB1 is substituted for CndB2 demonstrate that the two enzymes possess nearly identical activities. It depends on [2Fe-2S] cluster as a cofactor.

Component of the chloroacetanilide N-alkylformylase multicomponent enzyme system involved in the degradation of chloroacetanilide herbicides (N-alkoxyalkyl-N-chloroacetyl-substituted aniline derivatives). In vitro, functions as an intermediate electron transfer protein. This Rhizorhabdus wittichii (strain DC-6 / KACC 16600) (Sphingomonas wittichii) protein is Chloroacetanilide N-alkylformylase 1, ferredoxin component.